The sequence spans 155 residues: Small ribosomal subunit protein uS7c (155 aa).

Belongs to the universal ribosomal protein uS7 family. Part of the 30S ribosomal subunit.

It localises to the plastid. The protein localises to the chloroplast. One of the primary rRNA binding proteins, it binds directly to 16S rRNA where it nucleates assembly of the head domain of the 30S subunit. The chain is Small ribosomal subunit protein uS7c (rps7) from Dioscorea bulbifera (Air potato).